The following is a 113-amino-acid chain: MASRAAAGLLLCGVALVFLVLLQGTQSVYIQYQGFRVQLKSVKKLSDLEGQWAPSPRLQAQSPQPSVCHHSALPPDLQPICQSEEAASIFQALRTIAGDDCELCVNVACTGCS.

The first 27 residues, 1-27 (MASRAAAGLLLCGVALVFLVLLQGTQS), serve as a signal peptide directing secretion. Residues 28 to 97 (VYIQYQGFRV…SIFQALRTIA (70 aa)) constitute a propeptide that is removed on maturation. 3 disulfide bridges follow: C68–C81, C101–C109, and C104–C112.

The protein belongs to the guanylin family.

It is found in the secreted. In terms of biological role, endogenous activator of intestinal guanylate cyclase. It stimulates this enzyme through the same receptor binding region as the heat-stable enterotoxins. May be a potent physiological regulator of intestinal fluid and electrolyte transport. May be an autocrine/paracrine regulator of intestinal salt and water transport. This chain is Guanylate cyclase activator 2B (GUCA2B), found in Sus scrofa (Pig).